Reading from the N-terminus, the 232-residue chain is Beta-casein (232 aa).

An N-terminal signal peptide occupies residues 1–15; it reads MKVLILACRVALALA. A phosphoserine mark is found at Ser-30, Ser-32, Ser-33, and Ser-34.

This sequence belongs to the beta-casein family. As to expression, mammary gland specific. Secreted in milk.

The protein localises to the secreted. Important role in determination of the surface properties of the casein micelles. The protein is Beta-casein (CSN2) of Camelus dromedarius (Dromedary).